An 84-amino-acid polypeptide reads, in one-letter code: Small ribosomal subunit protein bS16 (84 aa).

Belongs to the bacterial ribosomal protein bS16 family.

This chain is Small ribosomal subunit protein bS16, found in Acaryochloris marina (strain MBIC 11017).